The sequence spans 296 residues: Formamidopyrimidine-DNA glycosylase (296 aa).

P2 serves as the catalytic Schiff-base intermediate with DNA. The Proton donor role is filled by E3. The active-site Proton donor; for beta-elimination activity is K61. DNA is bound by residues H104, R123, and K169. The segment at 255-289 (DAYGREGEPCRRCGAIMRRDKFMNRSSFYCPRCQP) adopts an FPG-type zinc-finger fold. R279 (proton donor; for delta-elimination activity) is an active-site residue.

Belongs to the FPG family. In terms of assembly, monomer. Zn(2+) is required as a cofactor.

It carries out the reaction Hydrolysis of DNA containing ring-opened 7-methylguanine residues, releasing 2,6-diamino-4-hydroxy-5-(N-methyl)formamidopyrimidine.. It catalyses the reaction 2'-deoxyribonucleotide-(2'-deoxyribose 5'-phosphate)-2'-deoxyribonucleotide-DNA = a 3'-end 2'-deoxyribonucleotide-(2,3-dehydro-2,3-deoxyribose 5'-phosphate)-DNA + a 5'-end 5'-phospho-2'-deoxyribonucleoside-DNA + H(+). In terms of biological role, involved in base excision repair of DNA damaged by oxidation or by mutagenic agents. Acts as a DNA glycosylase that recognizes and removes damaged bases. Has a preference for oxidized purines, such as 7,8-dihydro-8-oxoguanine (8-oxoG). Has AP (apurinic/apyrimidinic) lyase activity and introduces nicks in the DNA strand. Cleaves the DNA backbone by beta-delta elimination to generate a single-strand break at the site of the removed base with both 3'- and 5'-phosphates. In Mycobacterium sp. (strain KMS), this protein is Formamidopyrimidine-DNA glycosylase.